The primary structure comprises 615 residues: ATP-dependent RNA helicase mrh4, mitochondrial (615 aa).

The N-terminal 37 residues, 1–37 (MLRPKAGKCLLCSFRAAQKPVSQKWPSRALSMRTRLP), are a transit peptide targeting the mitochondrion. The tract at residues 21–108 (VSQKWPSRAL…HRDRDDKKDR (88 aa)) is disordered. Positions 90–108 (QERRTSRLDHRDRDDKKDR) are enriched in basic and acidic residues. Residues 138–171 (QSFEQFALLDSVKQAIFQQALPELKEHVPTPVQR) carry the Q motif motif. Residues 184-395 (RRPKSEMEQY…RKRFPDINRL (212 aa)) form the Helicase ATP-binding domain. 197-204 (AETGSGKT) is a binding site for ATP. Positions 342–345 (DEAD) match the DEAD box motif. In terms of domain architecture, Helicase C-terminal spans 444–615 (PVKGLMDVKR…EGMFEGKALI (172 aa)).

Belongs to the DEAD box helicase family. MRH4 subfamily.

It is found in the mitochondrion. It carries out the reaction ATP + H2O = ADP + phosphate + H(+). Functionally, ATP-binding RNA helicase involved in mitochondrial RNA metabolism. Required for maintenance of mitochondrial DNA. In Sclerotinia sclerotiorum (strain ATCC 18683 / 1980 / Ss-1) (White mold), this protein is ATP-dependent RNA helicase mrh4, mitochondrial (mrh4).